A 98-amino-acid chain; its full sequence is UPF0235 protein Asuc_1977 (98 aa).

The protein belongs to the UPF0235 family.

The chain is UPF0235 protein Asuc_1977 from Actinobacillus succinogenes (strain ATCC 55618 / DSM 22257 / CCUG 43843 / 130Z).